We begin with the raw amino-acid sequence, 539 residues long: CTP synthase (539 aa).

The tract at residues 1-268 (MSFKSIFLTG…SDFLLNKLGF (268 aa)) is amidoligase domain. Residue Ser-14 participates in CTP binding. Ser-14 is a UTP binding site. 15–20 (SLGKGL) serves as a coordination point for ATP. Tyr-55 serves as a coordination point for L-glutamine. An ATP-binding site is contributed by Asp-72. Mg(2+) contacts are provided by Asp-72 and Glu-142. CTP contacts are provided by residues 149 to 151 (DIE), 188 to 193 (KTKPTQ), and Lys-224. Residues 188-193 (KTKPTQ) and Lys-224 each bind UTP. Leu-242 is an ATP binding site. Residues 294–532 (RIGLVGKYLE…IRAAKAYSLE (239 aa)) form the Glutamine amidotransferase type-1 domain. Residue Gly-353 coordinates L-glutamine. The Nucleophile; for glutamine hydrolysis role is filled by Cys-380. Residues 381-384 (LGMQ), Glu-404, and Arg-460 each bind L-glutamine. Active-site residues include His-505 and Glu-507.

It belongs to the CTP synthase family. In terms of assembly, homotetramer.

The enzyme catalyses UTP + L-glutamine + ATP + H2O = CTP + L-glutamate + ADP + phosphate + 2 H(+). It carries out the reaction L-glutamine + H2O = L-glutamate + NH4(+). The catalysed reaction is UTP + NH4(+) + ATP = CTP + ADP + phosphate + 2 H(+). It functions in the pathway pyrimidine metabolism; CTP biosynthesis via de novo pathway; CTP from UDP: step 2/2. Allosterically activated by GTP, when glutamine is the substrate; GTP has no effect on the reaction when ammonia is the substrate. The allosteric effector GTP functions by stabilizing the protein conformation that binds the tetrahedral intermediate(s) formed during glutamine hydrolysis. Inhibited by the product CTP, via allosteric rather than competitive inhibition. Its function is as follows. Catalyzes the ATP-dependent amination of UTP to CTP with either L-glutamine or ammonia as the source of nitrogen. May be involved in lipopolysaccharide biosynthesis, potentially channelling CTP directly to CMP-KDO synthetase. Regulates intracellular CTP levels through interactions with the four ribonucleotide triphosphates. The sequence is that of CTP synthase from Chlamydia trachomatis serovar D (strain ATCC VR-885 / DSM 19411 / UW-3/Cx).